Here is a 401-residue protein sequence, read N- to C-terminus: Enoyl-[acyl-carrier-protein] reductase [NADH] 1 (401 aa).

Residues 48 to 53 (GSSSGY), 74 to 75 (FE), 111 to 112 (DA), and 139 to 140 (LA) contribute to the NAD(+) site. Residue tyrosine 225 coordinates substrate. Tyrosine 235 functions as the Proton donor in the catalytic mechanism. Residues lysine 244 and 273–275 (VVT) contribute to the NAD(+) site.

The protein belongs to the TER reductase family. In terms of assembly, monomer.

It catalyses the reaction a 2,3-saturated acyl-[ACP] + NAD(+) = a (2E)-enoyl-[ACP] + NADH + H(+). The catalysed reaction is a 2,3-saturated acyl-CoA + NAD(+) = a (2E)-enoyl-CoA + NADH + H(+). The enzyme catalyses (2E)-butenoyl-[ACP] + NADH + H(+) = butanoyl-[ACP] + NAD(+). It carries out the reaction butanoyl-CoA + NAD(+) = (2E)-butenoyl-CoA + NADH + H(+). Its pathway is lipid metabolism; fatty acid biosynthesis. With respect to regulation, weakly inhibited by triclosan. In terms of biological role, involved in the final reduction of the elongation cycle of fatty acid synthesis (FAS II). Catalyzes the NADH-dependent reduction of a carbon-carbon double bond in an enoyl moiety that is covalently linked to an acyl carrier protein (ACP). It can use both crotonyl-CoA and crotonyl-ACP. This Vibrio cholerae serotype O1 (strain ATCC 39315 / El Tor Inaba N16961) protein is Enoyl-[acyl-carrier-protein] reductase [NADH] 1.